We begin with the raw amino-acid sequence, 177 residues long: Large ribosomal subunit protein uL6 (177 aa).

It belongs to the universal ribosomal protein uL6 family. In terms of assembly, part of the 50S ribosomal subunit.

Its function is as follows. This protein binds to the 23S rRNA, and is important in its secondary structure. It is located near the subunit interface in the base of the L7/L12 stalk, and near the tRNA binding site of the peptidyltransferase center. The chain is Large ribosomal subunit protein uL6 from Vibrio cholerae serotype O1 (strain ATCC 39541 / Classical Ogawa 395 / O395).